We begin with the raw amino-acid sequence, 498 residues long: ATP synthase subunit beta, chloroplastic (498 aa).

172 to 179 (GGAGVGKT) is a binding site for ATP.

It belongs to the ATPase alpha/beta chains family. In terms of assembly, F-type ATPases have 2 components, CF(1) - the catalytic core - and CF(0) - the membrane proton channel. CF(1) has five subunits: alpha(3), beta(3), gamma(1), delta(1), epsilon(1). CF(0) has four main subunits: a(1), b(1), b'(1) and c(9-12).

The protein localises to the plastid. It localises to the chloroplast thylakoid membrane. It carries out the reaction ATP + H2O + 4 H(+)(in) = ADP + phosphate + 5 H(+)(out). Its function is as follows. Produces ATP from ADP in the presence of a proton gradient across the membrane. The catalytic sites are hosted primarily by the beta subunits. The protein is ATP synthase subunit beta, chloroplastic of Illicium oligandrum (Star anise).